Here is a 194-residue protein sequence, read N- to C-terminus: Endonuclease V (194 aa).

Asp31 and Glu95 together coordinate Mg(2+).

It belongs to the endonuclease V family. Mg(2+) serves as cofactor.

It localises to the cytoplasm. The catalysed reaction is Endonucleolytic cleavage at apurinic or apyrimidinic sites to products with a 5'-phosphate.. In terms of biological role, DNA repair enzyme involved in the repair of deaminated bases. Selectively cleaves double-stranded DNA at the second phosphodiester bond 3' to a deoxyinosine leaving behind the intact lesion on the nicked DNA. In Pyrococcus abyssi (strain GE5 / Orsay), this protein is Endonuclease V.